A 568-amino-acid polypeptide reads, in one-letter code: K(+) efflux antiporter 5 (568 aa).

The N-terminal stretch at 1 to 20 is a signal peptide; that stretch reads MARFAVIGLTFLLLLGTSLS. The segment at 59 to 78 is disordered; the sequence is EFSENDSPEGSDGASFNSSV. 12 consecutive transmembrane segments (helical) span residues 154–174, 178–198, 201–221, 230–250, 264–284, 298–318, 334–354, 389–409, 422–442, 447–467, 476–496, and 510–530; these read LISDLVVIIVFAAIGGIVFSC, PVIVGYLLAGSIIGPGGLKFI, MVQVETVAQFGVVFLLFALGL, VVGPVAVLGGLLQIVLLMFLC, GIFVGAFLSMSSTAVVVKFLV, IGILIFQDCVVGLLFALLPVL, LLLILSIYLTVASLLTWSFVP, LGLSLELGSFVAGVMLSTTEF, NLFAALFLSSIGMLINVHFLW, ILLASVILVIVIKTAIAAVVV, ISFHVGVLLAQIGEFAFVLLS, and LLLLGTTALSLVTTPLLFKLI.

The protein belongs to the monovalent cation:proton antiporter 2 (CPA2) transporter (TC 2.A.37) family. KEA (TC 2.A.37.1) subfamily. In terms of tissue distribution, expressed in roots, stems, leaves, flowers and silique.

It localises to the golgi apparatus membrane. Its subcellular location is the golgi apparatus. It is found in the trans-Golgi network membrane. The protein resides in the prevacuolar compartment membrane. The protein localises to the endomembrane system. The enzyme catalyses K(+)(in) + H(+)(out) = K(+)(out) + H(+)(in). Electroneutral K(+)/H(+) efflux antiporter involved in K(+) homeostasis and osmotic adjustment. Together with KEA4 and KEA6, promotes growth and development, and facilitates endosomal pH and ions homeostasis, as well as salt tolerance (e.g. K(+), NaCl and LiCl), probably by supporting cell wall biosynthesis during rapid etiolated seedling growth. This chain is K(+) efflux antiporter 5, found in Arabidopsis thaliana (Mouse-ear cress).